A 76-amino-acid chain; its full sequence is Sec-independent protein translocase protein TatA (76 aa).

Residues 1 to 21 (MGGLSIWHWLIVLLIVALVFG) form a helical membrane-spanning segment. The tract at residues 40–76 (KDGMKEGETPADAQQLPRTGTVDVNAKETTRSDSNKA) is disordered. Residues 64 to 76 (NAKETTRSDSNKA) are compositionally biased toward basic and acidic residues.

This sequence belongs to the TatA/E family. In terms of assembly, the Tat system comprises two distinct complexes: a TatABC complex, containing multiple copies of TatA, TatB and TatC subunits, and a separate TatA complex, containing only TatA subunits. Substrates initially bind to the TatABC complex, which probably triggers association of the separate TatA complex to form the active translocon.

Its subcellular location is the cell inner membrane. Functionally, part of the twin-arginine translocation (Tat) system that transports large folded proteins containing a characteristic twin-arginine motif in their signal peptide across membranes. TatA could form the protein-conducting channel of the Tat system. This Burkholderia ambifaria (strain MC40-6) protein is Sec-independent protein translocase protein TatA.